Reading from the N-terminus, the 543-residue chain is Zinc finger CCCH-type with G patch domain-containing protein (543 aa).

2 disordered regions span residues 55-79 (AATS…DNPI) and 95-132 (TEDS…DKLD). Residues 65–76 (DTAGRAPPATAD) are compositionally biased toward low complexity. The segment covering 118–131 (DDDADNDDDADDKL) has biased composition (acidic residues). The C3H1-type zinc finger occupies 186-209 (PCAYFLEGECRFTDEKCRYSHGEV). Positions 272 to 304 (PFEDLLPLDEDEDGQEAAEDSESDTDGADEEEA) are disordered. A compositionally biased stretch (acidic residues) spans 277-304 (LPLDEDEDGQEAAEDSESDTDGADEEEA). Residues 335–381 (TRGIGSKIMQKMGYIVGTGLGREGEGIVVPVSAQVLPQGRSLDYCME) form the G-patch domain. The interval 438–460 (GAAGGESSRPNRNRPGALSRQEL) is disordered.

Its subcellular location is the nucleus. In terms of biological role, transcription repressor. This chain is Zinc finger CCCH-type with G patch domain-containing protein, found in Anopheles gambiae (African malaria mosquito).